The chain runs to 52 residues: uncharacterized protein (52 aa).

This is an uncharacterized protein from Bos taurus papillomavirus 4 (Bovine papillomavirus 4).